The sequence spans 883 residues: Envelope glycoprotein B (883 aa).

Residues 1 to 31 (MQSYIAVNIDMASLKMLICVCVAILIPSTLS) form the signal peptide. The Virion surface portion of the chain corresponds to 32 to 750 (QDSHGIAGII…SGIASFLSNP (719 aa)). Cystine bridges form between C77-C535, C94-C491, C167-C229, C321-C369, and C558-C608. N-linked (GlcNAc...) asparagine; by host glycans are attached at residues N102 and N121. Residues 134–140 (TWALFSR) form an involved in fusion and/or binding to host membrane region. N211 carries N-linked (GlcNAc...) asparagine; by host glycosylation. The involved in fusion and/or binding to host membrane stretch occupies residues 216-223 (HQTLGYRT). 2 N-linked (GlcNAc...) asparagine; by host glycosylation sites follow: N262 and N360. The tract at residues 428-457 (QNHLPRGRERRQAAGRRTASLQSGPQGDRI) is disordered. 3 N-linked (GlcNAc...) asparagine; by host glycosylation sites follow: N579, N635, and N649. 2 hydrophobic membrane proximal region regions span residues 694-748 (IDTV…SFLS) and 724-744 (ALGT…SGIA). The helical transmembrane segment at 751-771 (FAALGIGIAVVVSIILGLLAF) threads the bilayer. The Intravirion segment spans residues 772–883 (KYVMNLKSNP…PSWAEESEDE (112 aa)). Residues 791-817 (PPAGTPPRPSRRYYKDEEEVEEDSDED) are disordered. The segment covering 806–817 (DEEEVEEDSDED) has biased composition (acidic residues). The short motif at 868-871 (YPLL) is the Internalization motif element.

The protein belongs to the herpesviridae glycoprotein B family. In terms of assembly, homotrimer; disulfide-linked. Binds to heparan sulfate proteoglycans. Interacts with gH/gL heterodimer. In terms of processing, a proteolytic cleavage by host furin generates two subunits that remain linked by disulfide bonds.

The protein localises to the virion membrane. The protein resides in the host cell membrane. It is found in the host endosome membrane. Its subcellular location is the host Golgi apparatus membrane. In terms of biological role, envelope glycoprotein that forms spikes at the surface of virion envelope. Essential for the initial attachment to heparan sulfate moieties of the host cell surface proteoglycans. Involved in fusion of viral and cellular membranes leading to virus entry into the host cell. Following initial binding to its host receptors, membrane fusion is mediated by the fusion machinery composed at least of gB and the heterodimer gH/gL. May be involved in the fusion between the virion envelope and the outer nuclear membrane during virion egress. The chain is Envelope glycoprotein B from Gallus gallus (Chicken).